The following is a 2007-amino-acid chain: Structural maintenance of chromosomes flexible hinge domain-containing protein 1 (2007 aa).

Alanine 2 carries the N-acetylalanine modification. The interval 111–702 (TKERIDFLPH…LSVTWPEGDE (592 aa)) is ATPase activity domain. A Phosphoserine modification is found at serine 833. Position 1350 is an N6-acetyllysine (lysine 1350). Lysine 1375 participates in a covalent cross-link: Glycyl lysine isopeptide (Lys-Gly) (interchain with G-Cter in SUMO2). Position 1500 is a phosphothreonine (threonine 1500). One can recognise an SMC hinge domain in the interval 1721–1848 (GDILGKIAHL…DNLDAANHYR (128 aa)). Lysine 1803 bears the N6-succinyllysine mark. Residue serine 1975 is modified to Phosphoserine. Residues 1984 to 2007 (PIPTKRMRRESTRQNRRPKGDVPN) are disordered.

It belongs to the SMC family. Highly divergent. As to quaternary structure, homodimer; homodimerizes via its SMC hinge domain. Interacts with LRIF1. In terms of processing, sumoylated with SUMO1. In terms of tissue distribution, during embryogenesis, specifically expressed in immature olfactory sensory neurons.

The protein resides in the chromosome. It carries out the reaction ATP + H2O = ADP + phosphate + H(+). Its function is as follows. Non-canonical member of the structural maintenance of chromosomes (SMC) protein family that plays a key role in epigenetic silencing by regulating chromatin architecture. Promotes heterochromatin formation in both autosomes and chromosome X, probably by mediating the merge of chromatin compartments. Plays a key role in chromosome X inactivation in females by promoting the spreading of heterochromatin. Recruited to inactivated chromosome X by Xist RNA and acts by mediating the merge of chromatin compartments: promotes random chromatin interactions that span the boundaries of existing structures, leading to create a compartment-less architecture typical of inactivated chromosome X. Required to facilitate Xist RNA spreading. Also required for silencing of a subset of clustered autosomal loci in somatic cells, such as the DUX4 locus. Has ATPase activity; may participate in structural manipulation of chromatin in an ATP-dependent manner as part of its role in gene expression regulation. Also plays a role in DNA repair: localizes to sites of DNA double-strand breaks in response to DNA damage to promote the repair of DNA double-strand breaks. Acts by promoting non-homologous end joining (NHEJ) and inhibiting homologous recombination (HR) repair. Required during preimplantation development, probably acts by regulating chromatin architecture. In Mus musculus (Mouse), this protein is Structural maintenance of chromosomes flexible hinge domain-containing protein 1.